Reading from the N-terminus, the 338-residue chain is RNA 3'-terminal phosphate cyclase (338 aa).

ATP is bound by residues glutamine 103 and 283-287 (YLADQ). Histidine 308 functions as the Tele-AMP-histidine intermediate in the catalytic mechanism.

It belongs to the RNA 3'-terminal cyclase family. Type 1 subfamily.

It localises to the cytoplasm. It carries out the reaction a 3'-end 3'-phospho-ribonucleotide-RNA + ATP = a 3'-end 2',3'-cyclophospho-ribonucleotide-RNA + AMP + diphosphate. Its function is as follows. Catalyzes the conversion of 3'-phosphate to a 2',3'-cyclic phosphodiester at the end of RNA. The mechanism of action of the enzyme occurs in 3 steps: (A) adenylation of the enzyme by ATP; (B) transfer of adenylate to an RNA-N3'P to produce RNA-N3'PP5'A; (C) and attack of the adjacent 2'-hydroxyl on the 3'-phosphorus in the diester linkage to produce the cyclic end product. The biological role of this enzyme is unknown but it is likely to function in some aspects of cellular RNA processing. The polypeptide is RNA 3'-terminal phosphate cyclase (Shigella boydii serotype 4 (strain Sb227)).